Consider the following 63-residue polypeptide: Anaphase-promoting complex subunit 13 (63 aa).

A disordered region spans residues 36–63; sequence KTDDTEETNQETQQADAETWRDLALDTQ. Residues 53–63 show a composition bias toward basic and acidic residues; that stretch reads ETWRDLALDTQ.

It belongs to the APC13 family. In terms of assembly, component of the anaphase promoting complex/cyclosome (APC/C) complex. In terms of tissue distribution, expressed constitutively in roots, leaves, stems, buds, flowers, and seeds.

It is found in the nucleus. Its pathway is protein modification; protein ubiquitination. In terms of biological role, component of the anaphase promoting complex/cyclosome (APC/C), a cell cycle-regulated E3 ubiquitin ligase that controls progression through mitosis and the G1 phase of the cell cycle. The APC/C complex acts by mediating ubiquitination and subsequent degradation of target proteins. Regulates global growth and development, including phyllotaxis and apical dominance. Required for pollen maturation. Promotes (pri) miRNA transcription of each MIR159 genes. The chain is Anaphase-promoting complex subunit 13 from Arabidopsis thaliana (Mouse-ear cress).